The sequence spans 175 residues: NADH-ubiquinone oxidoreductase chain 6 (175 aa).

Transmembrane regions (helical) follow at residues 1–21 (MMYIVFIMSVLYVVGFIGFSS), 24–44 (SPVYGGMSLVVSGGLGCGIIM), 51–71 (LGLVVFLVYLGGMMVVFGYTI), 87–107 (VVLSAFLVGLLMEVFMVVWLF), 112–132 (ELVGFYFGGLESFVTLGEGGF), and 148–168 (CGFWFLAMAGWMLFVSIFIAT).

Belongs to the complex I subunit 6 family. As to quaternary structure, core subunit of respiratory chain NADH dehydrogenase (Complex I) which is composed of 45 different subunits.

It localises to the mitochondrion inner membrane. It carries out the reaction a ubiquinone + NADH + 5 H(+)(in) = a ubiquinol + NAD(+) + 4 H(+)(out). In terms of biological role, core subunit of the mitochondrial membrane respiratory chain NADH dehydrogenase (Complex I) which catalyzes electron transfer from NADH through the respiratory chain, using ubiquinone as an electron acceptor. Essential for the catalytic activity and assembly of complex I. The polypeptide is NADH-ubiquinone oxidoreductase chain 6 (MT-ND6) (Elephas maximus (Indian elephant)).